A 626-amino-acid polypeptide reads, in one-letter code: Endoglucanase 19 (626 aa).

An N-terminal signal peptide occupies residues 1 to 23 (MGSRTTISILVVLLLGLVQLAIS). Catalysis depends on D79, which acts as the Nucleophile. Active-site residues include H412, D464, and E473. A disordered region spans residues 515-536 (APVPQRKPTKPPAASSPSPITI). A compositionally biased stretch (low complexity) spans 526-536 (PAASSPSPITI). N560 and N622 each carry an N-linked (GlcNAc...) asparagine glycan.

It belongs to the glycosyl hydrolase 9 (cellulase E) family.

Its subcellular location is the secreted. It catalyses the reaction Endohydrolysis of (1-&gt;4)-beta-D-glucosidic linkages in cellulose, lichenin and cereal beta-D-glucans.. This is Endoglucanase 19 from Arabidopsis thaliana (Mouse-ear cress).